The primary structure comprises 665 residues: Dystrophia myotonica WD repeat-containing protein (665 aa).

The span at 1-11 (MAAGGAEGGPG) shows a compositional bias: gly residues. Disordered regions lie at residues 1 to 91 (MAAG…PALP) and 100 to 119 (LGDP…LGAG). A2 is subject to N-acetylalanine. Over residues 52–64 (PAPPQPTQPPPGP) the composition is skewed to pro residues. Residues 65–76 (AAASGPGAAGPA) show a composition bias toward low complexity. Pro residues predominate over residues 77–89 (SSPPPAGPGPGPA). WD repeat units follow at residues 208 to 248 (IDKT…TSTP), 279 to 318 (VGEG…LRGL), 321 to 360 (SYFG…VVAR), and 363 to 445 (GHKS…LSPH). Disordered stretches follow at residues 380 to 413 (AEEA…VSPL), 446 to 506 (PSLA…SMEP), 524 to 564 (RDRG…RSRL), and 628 to 665 (DEET…GTVV). Low complexity predominate over residues 450 to 491 (RTRTLPGTPGATPPASGSSRAGETGAGPLPRSLSRSNSLPHP). The residue at position 487 (S487) is a Phosphoserine. Omega-N-methylarginine is present on R543. One copy of the WD 5 repeat lies at 592–629 (IAQERLTVLLFLEDCIITACQEGLICTWARPGKAFTDE). Residues 634-646 (QAGQASWPRSPSK) show a composition bias toward polar residues. The span at 653 to 665 (SSQPGSSPSGTVV) shows a compositional bias: low complexity.

As to quaternary structure, component of the USP12/DMWD/WDR48 deubiquitinating complex. Interacts with USP12; promotes its enzymatic activity. Interacts with USP46. In terms of tissue distribution, widely expressed in brain where it localizes to the olfactory bulb, forebrain, thalamus, hippocampus, cerebellum, cortex and hypothalamus (at protein level). Expression seems to be particularly strong in areas of high synaptic density such as the glomerular layer of the olfactory bulb, and mossy fiber terminal fields of the hippocampus (at protein level). Expressed in retina, with strongest expression in the external and internal plexiform layers (at protein level). Strongly expressed in brain and testis. Also detected at lower levels in heart, kidney, liver, lung, ovary, uterus, bladder and skeletal muscle. In testis, expression seems to be restricted to secondary spermatocytes.

Its subcellular location is the cytoplasm. The protein resides in the nucleus. The protein localises to the perikaryon. It localises to the cell projection. It is found in the dendrite. In terms of biological role, regulator of the deubiquitinating USP12/DMWD/WDR48 complex. Functions as a cofactor that promotes USP12 enzymatic activity. The polypeptide is Dystrophia myotonica WD repeat-containing protein (Dmwd) (Mus musculus (Mouse)).